The chain runs to 136 residues: Large ribosomal subunit protein uL16 (136 aa).

The protein belongs to the universal ribosomal protein uL16 family. In terms of assembly, part of the 50S ribosomal subunit.

In terms of biological role, binds 23S rRNA and is also seen to make contacts with the A and possibly P site tRNAs. The polypeptide is Large ribosomal subunit protein uL16 (Histophilus somni (strain 129Pt) (Haemophilus somnus)).